Here is a 209-residue protein sequence, read N- to C-terminus: Nascent polypeptide-associated complex subunit alpha (209 aa).

Residues 1-21 (MSNPRVEELPDEEPKKTTVQE) are compositionally biased toward basic and acidic residues. Disordered regions lie at residues 1–51 (MSNP…HNRN) and 121–175 (QLAS…DKDI). Positions 22-36 (HEDDSSDDSEVEEVG) are enriched in acidic residues. Residues 49 to 114 (NRNEKKARKA…AKIEDVNAAA (66 aa)) form the NAC-A/B domain. The span at 127-150 (AEDHSGHNHGEPSKAVEADEKKED) shows a compositional bias: basic and acidic residues. Acidic residues predominate over residues 151–166 (KEDDEDEEEEEEEEVD). The 40-residue stretch at 170-209 (LEDKDIELVMTQANVSRNKAVKALKENDNDIVNSIMALSI) folds into the UBA domain.

The protein belongs to the NAC-alpha family. As to quaternary structure, part of the nascent polypeptide-associated complex (NAC), consisting of EGD2 and EGD1. NAC associates with ribosomes via EGD1.

Its subcellular location is the cytoplasm. It is found in the nucleus. Component of the nascent polypeptide-associated complex (NAC), a dynamic component of the ribosomal exit tunnel, protecting the emerging polypeptides from interaction with other cytoplasmic proteins to ensure appropriate nascent protein targeting. The NAC complex also promotes mitochondrial protein import by enhancing productive ribosome interactions with the outer mitochondrial membrane and blocks the inappropriate interaction of ribosomes translating non-secretory nascent polypeptides with translocation sites in the membrane of the endoplasmic reticulum. EGD2 may also be involved in transcription regulation. This chain is Nascent polypeptide-associated complex subunit alpha (EGD2), found in Gibberella zeae (strain ATCC MYA-4620 / CBS 123657 / FGSC 9075 / NRRL 31084 / PH-1) (Wheat head blight fungus).